A 116-amino-acid polypeptide reads, in one-letter code: Large ribosomal subunit protein bL20 (116 aa).

It belongs to the bacterial ribosomal protein bL20 family.

Functionally, binds directly to 23S ribosomal RNA and is necessary for the in vitro assembly process of the 50S ribosomal subunit. It is not involved in the protein synthesizing functions of that subunit. The sequence is that of Large ribosomal subunit protein bL20 from Mycoplasmopsis synoviae (strain 53) (Mycoplasma synoviae).